The following is a 497-amino-acid chain: Glycerol kinase (497 aa).

Thr12 is a binding site for ADP. Residues Thr12, Thr13, and Ser14 each contribute to the ATP site. Position 12 (Thr12) interacts with sn-glycerol 3-phosphate. ADP is bound at residue Arg16. The sn-glycerol 3-phosphate site is built by Arg82, Glu83, Tyr134, and Asp243. Arg82, Glu83, Tyr134, Asp243, and Gln244 together coordinate glycerol. ADP contacts are provided by Thr265 and Gly308. Thr265, Gly308, Gln312, and Gly409 together coordinate ATP. ADP is bound by residues Gly409 and Asn413.

This sequence belongs to the FGGY kinase family. Homotetramer and homodimer (in equilibrium).

The enzyme catalyses glycerol + ATP = sn-glycerol 3-phosphate + ADP + H(+). Its pathway is polyol metabolism; glycerol degradation via glycerol kinase pathway; sn-glycerol 3-phosphate from glycerol: step 1/1. Its activity is regulated as follows. Activated by phosphorylation and inhibited by fructose 1,6-bisphosphate (FBP). In terms of biological role, key enzyme in the regulation of glycerol uptake and metabolism. Catalyzes the phosphorylation of glycerol to yield sn-glycerol 3-phosphate. This is Glycerol kinase from Thermoanaerobacter sp. (strain X514).